Reading from the N-terminus, the 357-residue chain is Chorismate synthase (357 aa).

The span at 38 to 49 shows a compositional bias: basic and acidic residues; sequence EKDIQPDLDRRK. A disordered region spans residues 38-60; sequence EKDIQPDLDRRKPGTSRYTTPRR. 2 residues coordinate NADP(+): arginine 48 and arginine 54. FMN is bound by residues 125-127, 243-244, glycine 283, 298-302, and arginine 324; these read RSS, NA, and KPTSS.

It belongs to the chorismate synthase family. Homotetramer. FMNH2 serves as cofactor.

It carries out the reaction 5-O-(1-carboxyvinyl)-3-phosphoshikimate = chorismate + phosphate. Its pathway is metabolic intermediate biosynthesis; chorismate biosynthesis; chorismate from D-erythrose 4-phosphate and phosphoenolpyruvate: step 7/7. Its function is as follows. Catalyzes the anti-1,4-elimination of the C-3 phosphate and the C-6 proR hydrogen from 5-enolpyruvylshikimate-3-phosphate (EPSP) to yield chorismate, which is the branch point compound that serves as the starting substrate for the three terminal pathways of aromatic amino acid biosynthesis. This reaction introduces a second double bond into the aromatic ring system. The chain is Chorismate synthase from Haemophilus influenzae (strain PittEE).